Reading from the N-terminus, the 290-residue chain is 4-hydroxy-tetrahydrodipicolinate synthase (290 aa).

Position 48 (Thr48) interacts with pyruvate. Residue Tyr137 is the Proton donor/acceptor of the active site. Catalysis depends on Lys165, which acts as the Schiff-base intermediate with substrate. Residue Ile206 participates in pyruvate binding.

It belongs to the DapA family. As to quaternary structure, homotetramer; dimer of dimers.

Its subcellular location is the cytoplasm. It catalyses the reaction L-aspartate 4-semialdehyde + pyruvate = (2S,4S)-4-hydroxy-2,3,4,5-tetrahydrodipicolinate + H2O + H(+). Its pathway is amino-acid biosynthesis; L-lysine biosynthesis via DAP pathway; (S)-tetrahydrodipicolinate from L-aspartate: step 3/4. In terms of biological role, catalyzes the condensation of (S)-aspartate-beta-semialdehyde [(S)-ASA] and pyruvate to 4-hydroxy-tetrahydrodipicolinate (HTPA). In Ligilactobacillus salivarius (strain UCC118) (Lactobacillus salivarius), this protein is 4-hydroxy-tetrahydrodipicolinate synthase.